The following is a 74-amino-acid chain: UPF0346 protein LCA_0996 (74 aa).

This sequence belongs to the UPF0346 family.

This is UPF0346 protein LCA_0996 from Latilactobacillus sakei subsp. sakei (strain 23K) (Lactobacillus sakei subsp. sakei).